The sequence spans 381 residues: Cobalt-precorrin-5B C(1)-methyltransferase (381 aa).

This sequence belongs to the CbiD family.

It catalyses the reaction Co-precorrin-5B + S-adenosyl-L-methionine = Co-precorrin-6A + S-adenosyl-L-homocysteine. The protein operates within cofactor biosynthesis; adenosylcobalamin biosynthesis; cob(II)yrinate a,c-diamide from sirohydrochlorin (anaerobic route): step 6/10. Functionally, catalyzes the methylation of C-1 in cobalt-precorrin-5B to form cobalt-precorrin-6A. This is Cobalt-precorrin-5B C(1)-methyltransferase from Prochlorococcus marinus (strain SARG / CCMP1375 / SS120).